We begin with the raw amino-acid sequence, 130 residues long: Tripartite terminase subunit 2 (130 aa).

The protein belongs to the herpesviridae TRM2 protein family. Associates with TRM1 and TRM3 to form the tripartite terminase complex.

The protein localises to the host nucleus. Its function is as follows. Component of the molecular motor that translocates viral genomic DNA in empty capsid during DNA packaging. Forms a tripartite terminase complex together with TRM1 and TRM3 in the host cytoplasm. Once the complex reaches the host nucleus, it interacts with the capsid portal vertex. This portal forms a ring in which genomic DNA is translocated into the capsid. The chain is Tripartite terminase subunit 2 from Homo sapiens (Human).